A 121-amino-acid chain; its full sequence is Basic phospholipase A2 homolog BnSP-7 (121 aa).

7 disulfide bridges follow: Cys-26–Cys-115, Cys-28–Cys-44, Cys-43–Cys-95, Cys-49–Cys-121, Cys-50–Cys-88, Cys-57–Cys-81, and Cys-75–Cys-86. Positions 105–117 are important for membrane-damaging activities in eukaryotes and bacteria; heparin-binding; that stretch reads KKYRYHLKPFCKK.

The protein belongs to the phospholipase A2 family. Group II subfamily. K49 sub-subfamily. As to quaternary structure, homodimer; non-covalently linked (probable alternative/compact dimer conformation in solution). As to expression, expressed by the venom gland.

Its subcellular location is the secreted. Its activity is regulated as follows. Heparin inhibits the neuromuscular effect, myotoxin activity and edema-inducing effects. Bromophenacyl bromide (BPB) inhibits the neuromuscular effect, the myotoxin activity and edema-inducing effects. Its function is as follows. Snake venom phospholipase A2 (PLA2) that lacks enzymatic activity. Is myotoxic and displays edema-inducing activity. Displays bactericidal activity and promotes the blockage of the neuromuscular contraction of the chick biventer cervicis muscle. Also disrupts artificial membranes, and provokes tissue damages characterized by edema, necrosis and inflammation. May act as pro-inflammatory mediators, inducing metalloproteinase and cytokine production from the inflammatory and satellite cells. A model of myotoxic mechanism has been proposed: an apo Lys49-PLA2 is activated by the entrance of a hydrophobic molecule (e.g. fatty acid) at the hydrophobic channel of the protein leading to a reorientation of a monomer. This reorientation causes a transition between 'inactive' to 'active' states, causing alignment of C-terminal and membrane-docking sites (MDoS) side-by-side and putting the membrane-disruption sites (MDiS) in the same plane, exposed to solvent and in a symmetric position for both monomers. The MDoS region stabilizes the toxin on membrane by the interaction of charged residues with phospholipid head groups. Subsequently, the MDiS region destabilizes the membrane with penetration of hydrophobic residues. This insertion causes a disorganization of the membrane, allowing an uncontrolled influx of ions (i.e. calcium and sodium), and eventually triggering irreversible intracellular alterations and cell death. In Bothrops pauloensis (Neuwied's lancehead), this protein is Basic phospholipase A2 homolog BnSP-7.